Here is a 227-residue protein sequence, read N- to C-terminus: GFP-like non-fluorescent chromoprotein (227 aa).

The segment at residues 63–65 is a cross-link (2-iminomethyl-5-imidazolinone (Glu-Gly)); it reads EYG. Tyr64 carries the 2,3-didehydrotyrosine modification.

Belongs to the GFP family. Homotetramer. Contains a chromophore consisting of modified amino acid residues. The chromophore is formed by autocatalytic backbone condensation between Xaa-N and Gly-(N+2), oxidation of Tyr-(N+1) to didehydrotyrosine, and formation of a double bond to the alpha-amino nitrogen of residue Xaa-N. Maturation of the chromophore requires nothing other than molecular oxygen. The precise stereochemistry of the tyrosine has not been determined.

Non-fluorescent pigment protein that is lilac in color. The sequence is that of GFP-like non-fluorescent chromoprotein from Radianthus crispa (Leathery sea anemone).